The chain runs to 373 residues: 3-dehydroquinate synthase (373 aa).

Residues 67–72 (EGEETK), 101–105 (GVILD), 125–126 (TT), Lys138, and Lys147 contribute to the NAD(+) site. Zn(2+) contacts are provided by Glu180, His240, and His256.

Belongs to the sugar phosphate cyclases superfamily. Dehydroquinate synthase family. The cofactor is NAD(+). Co(2+) serves as cofactor. It depends on Zn(2+) as a cofactor.

Its subcellular location is the cytoplasm. The catalysed reaction is 7-phospho-2-dehydro-3-deoxy-D-arabino-heptonate = 3-dehydroquinate + phosphate. It functions in the pathway metabolic intermediate biosynthesis; chorismate biosynthesis; chorismate from D-erythrose 4-phosphate and phosphoenolpyruvate: step 2/7. Functionally, catalyzes the conversion of 3-deoxy-D-arabino-heptulosonate 7-phosphate (DAHP) to dehydroquinate (DHQ). In Chlamydia trachomatis serovar L2 (strain ATCC VR-902B / DSM 19102 / 434/Bu), this protein is 3-dehydroquinate synthase.